The following is a 96-amino-acid chain: Neutrophil defensin 3 (96 aa).

A signal peptide spans 1 to 19 (MRTLVILAAILLVALQAQA). Residues 20 to 66 (EPLQARTDEATAAQEQIPTDNPEVVVSLAWDESLAPKDSVPGLRKNM) constitute a propeptide that is removed on maturation. Disulfide bonds link cysteine 68/cysteine 96, cysteine 70/cysteine 85, and cysteine 75/cysteine 95.

It is found in the secreted. Has bacteriostatic activity against Gram-positive bacteria S.aureus and L.monocytogenes and Gram-negative bacterium E.coli and antifungal activity against C.neoformans. The sequence is that of Neutrophil defensin 3 from Macaca mulatta (Rhesus macaque).